Reading from the N-terminus, the 230-residue chain is Probable cytokinin riboside 5'-monophosphate phosphoribohydrolase LOG4 (230 aa).

Substrate is bound by residues Glu-91, 109 to 110 (RK), and 126 to 132 (GYGTIEE).

The protein belongs to the LOG family.

The enzyme catalyses N(6)-(dimethylallyl)adenosine 5'-phosphate + H2O = N(6)-dimethylallyladenine + D-ribose 5-phosphate. The catalysed reaction is 9-ribosyl-trans-zeatin 5'-phosphate + H2O = trans-zeatin + D-ribose 5-phosphate. Functionally, cytokinin-activating enzyme working in the direct activation pathway. Phosphoribohydrolase that converts inactive cytokinin nucleotides to the biologically active free-base forms. This Oryza sativa subsp. japonica (Rice) protein is Probable cytokinin riboside 5'-monophosphate phosphoribohydrolase LOG4 (LOGL4).